Consider the following 2812-residue polypeptide: Zonadhesin (2812 aa).

An N-terminal signal peptide occupies residues 1-17 (MVPPVWTLLLLVGAALF). Residues 18–2757 (RKEKPPDQKL…DAPPPRKPAS (2740 aa)) lie on the Extracellular side of the membrane. MAM domains are found at residues 39-204 (TQCD…SCNR), 209-368 (QTCS…PCGE), and 371-536 (PQCD…TCPV). Positions 61-84 (EDWVRASGPSPTGSTGAPGGYPNG) are disordered. Positions 66–75 (ASGPSPTGST) are enriched in low complexity. N-linked (GlcNAc...) asparagine glycosylation is found at N333 and N493. Disordered regions lie at residues 545 to 884 (VSPV…PTEK) and 904 to 929 (EKPT…KPTI). Positions 547 to 558 (PVSSTGPSETTG) are enriched in low complexity. The span at 559-570 (LTENPTISTKKP) shows a compositional bias: polar residues. The interval 573-1041 (SIEKPSVTTE…GTTTTSRSST (469 aa)) is 66 X heptapeptide repeats (approximate) (mucin-like domain). Low complexity-rich tracts occupy residues 592–603 (TIPTEKPTISTE), 651–675 (TEKP…MEEP), 713–842 (SPEK…STEK), 853–868 (STEK…TISP), and 916–929 (STEK…KPTI). One can recognise a TIL 1 domain in the interval 1044–1093 (CPPNARYESCACPASCKSPRPSCGPLCREGCVCNPGFLFSDNHCIQASSC). A VWFC 1 domain is found at 1103–1148 (EPGAEWFSPNCTEHCRCWPGSRVECQISQCGTHTVCQLKNGQYGCH). N1112 and N1188 each carry an N-linked (GlcNAc...) asparagine glycan. In terms of domain architecture, VWFD 1 spans 1154 to 1331 (ATCLVYGDPH…TDQDEDQECQ (178 aa)). 2 disulfides stabilise this stretch: C1156–C1291 and C1178–C1330. The segment covering 1302 to 1316 (HLKLDGSPAGDKEEL) has biased composition (basic and acidic residues). The interval 1302–1323 (HLKLDGSPAGDKEELGNSWQTD) is disordered. In terms of domain architecture, TIL 2 spans 1426-1479 (CPPNSKYSLCAKPCPDTCHSGFSGMFCSDRCVEACECNPGFVLSGLECIPRSQC). A VWFC 2 domain is found at 1480-1535 (GCLHPAGSYFKVGERWYKPGCKELCVCESNNRIRCQPWRCRAQEFCGQQDGIYGCH). Residues 1540–1720 (ATCTASGDPH…LPESSEPGCF (181 aa)) enclose the VWFD 2 domain. 2 disulfides stabilise this stretch: C1542–C1680 and C1564–C1719. 2 N-linked (GlcNAc...) asparagine glycosylation sites follow: N1685 and N1804. Residues 1812–1867 (CPPGSSYSPCSSPCPDTCSSINNPRDCPKALPCAESCECQKGHILSGTSCVPLGQC) form the TIL 3 domain. The region spanning 1868-1924 (GCTDPAGSYHPVGERWYTENTCTRLCTCSVHNNITCFQSTCKPNQICWALDGLLHCR) is the VWFC 3 domain. 2 N-linked (GlcNAc...) asparagine glycosylation sites follow: N1900 and N1946. The VWFD 3 domain maps to 1929–2108 (GVCQLPGESH…KDKDIDPSCQ (180 aa)). 2 disulfides stabilise this stretch: C1931–C2069 and C1953–C2107. A glycan (N-linked (GlcNAc...) asparagine) is linked at N2203. In terms of domain architecture, TIL 4 spans 2211 to 2267 (CPAYSSYTNCLPSCSPSCWDLDGRCEGAKVPSACAEGCICQPGYVLSEDKCVPRSQC). In terms of domain architecture, VWFC 4 spans 2268–2329 (GCKDAHGGSI…NSNCVSDKSE (62 aa)). In terms of domain architecture, VWFD 4 spans 2329–2505 (EQCSVYGDPR…SWEVKTEDAL (177 aa)). A disulfide bridge connects residues C2331 and C2468. N-linked (GlcNAc...) asparagine glycosylation is found at N2542 and N2701. Residues 2652–2797 (CGCTSNGIYY…KREKTQEGDR (146 aa)) enclose the VWFC 5 domain. One can recognise an EGF-like domain in the interval 2708–2744 (PESPCLQNPCQNDGQCREQGATFTCECEVGYGGGLCM). 3 disulfides stabilise this stretch: C2712-C2723, C2717-C2732, and C2734-C2743. A helical transmembrane segment spans residues 2758–2778 (NLVGVLLGLLVPVVVVLLAVT). Residues 2779-2812 (RECIYRTRRKREKTQEGDRLARLVDTDTVLDCAC) lie on the Cytoplasmic side of the membrane.

In terms of assembly, probably forms covalent oligomers. In terms of tissue distribution, in testis, primarily in haploid spermatids.

Its subcellular location is the cell membrane. Functionally, binds in a species-specific manner to the zona pellucida of the egg. May be involved in gamete recognition and/or signaling. This chain is Zonadhesin (ZAN), found in Homo sapiens (Human).